The chain runs to 939 residues: Isoleucine--tRNA ligase (939 aa).

The 'HIGH' region motif lies at 59 to 69; the sequence is PYANGDIHIGH. Residue glutamate 570 participates in L-isoleucyl-5'-AMP binding. A 'KMSKS' region motif is present at residues 611–615; the sequence is KMSKS. Lysine 614 provides a ligand contact to ATP. The Zn(2+) site is built by cysteine 902, cysteine 905, cysteine 922, and cysteine 925.

This sequence belongs to the class-I aminoacyl-tRNA synthetase family. IleS type 1 subfamily. In terms of assembly, monomer. It depends on Zn(2+) as a cofactor.

The protein resides in the cytoplasm. The enzyme catalyses tRNA(Ile) + L-isoleucine + ATP = L-isoleucyl-tRNA(Ile) + AMP + diphosphate. Its function is as follows. Catalyzes the attachment of isoleucine to tRNA(Ile). As IleRS can inadvertently accommodate and process structurally similar amino acids such as valine, to avoid such errors it has two additional distinct tRNA(Ile)-dependent editing activities. One activity is designated as 'pretransfer' editing and involves the hydrolysis of activated Val-AMP. The other activity is designated 'posttransfer' editing and involves deacylation of mischarged Val-tRNA(Ile). The sequence is that of Isoleucine--tRNA ligase from Nitrosomonas europaea (strain ATCC 19718 / CIP 103999 / KCTC 2705 / NBRC 14298).